A 196-amino-acid polypeptide reads, in one-letter code: UMP-CMP kinase (196 aa).

13 to 18 (GAGKGT) contributes to the ATP binding site. The segment at 33 to 63 (SAGDLLREERSRTDSEFGQLIDSYIKEGKIV) is NMP. A ribonucleoside 5'-phosphate-binding positions include Arg39, 61-63 (KIV), and 93-96 (GFPR). Asn100 contacts CMP. The interval 133–143 (ERGKSSGRTDD) is LID. Arg134 lines the ATP pocket. 2 residues coordinate a ribonucleoside 5'-phosphate: Arg140 and Arg151. Residue Arg179 participates in ATP binding.

It belongs to the adenylate kinase family. UMP-CMP kinase subfamily. As to quaternary structure, monomer. Requires Mg(2+) as cofactor.

The protein localises to the nucleus. Its subcellular location is the cytoplasm. It carries out the reaction CMP + ATP = CDP + ADP. The enzyme catalyses dCMP + ATP = dCDP + ADP. The catalysed reaction is UMP + ATP = UDP + ADP. It catalyses the reaction a 2'-deoxyribonucleoside 5'-diphosphate + ATP = a 2'-deoxyribonucleoside 5'-triphosphate + ADP. It carries out the reaction a ribonucleoside 5'-diphosphate + ATP = a ribonucleoside 5'-triphosphate + ADP. In terms of biological role, catalyzes the phosphorylation of pyrimidine nucleoside monophosphates at the expense of ATP. Plays an important role in de novo pyrimidine nucleotide biosynthesis. Has preference for UMP and CMP as phosphate acceptors. Also displays broad nucleoside diphosphate kinase activity. The sequence is that of UMP-CMP kinase (cmpk) from Danio rerio (Zebrafish).